Here is a 76-residue protein sequence, read N- to C-terminus: Zinc finger protein 706 (76 aa).

The span at 1 to 13 (MARGQQKIQSQQK) shows a compositional bias: low complexity. Disordered stretches follow at residues 1–32 (MARG…QKAA) and 53–76 (TFKQ…DVQA). The span at 14–25 (NAKKQAGQKKKQ) shows a compositional bias: basic residues. A C2H2-type zinc finger spans residues 39 to 62 (YTCTVCRTQMPDPKTFKQHFESKH). A compositionally biased stretch (basic and acidic residues) spans 53–62 (TFKQHFESKH).

The protein resides in the cytoplasm. It localises to the nucleus. Transcription repressor involved in the exit of embryonic stem cells (ESCs) from self-renewal. Acts by repressing expression of KLF4. This chain is Zinc finger protein 706, found in Homo sapiens (Human).